Here is a 396-residue protein sequence, read N- to C-terminus: MSQLKLNPYFGEYGGMYVPQILVPALKQLESAFVEAQTDESFQAEFTDLLKNYAGRPTALTLTRNLSPNPMVKIYLKREDLLHGGAHKTNQVLGQALLAKRMGKKEIIAETGAGQHGVATALACALLGLKCKVYMGAKDVARQSPNVFRMRLMGAEVIPVTSGSATLKDACNEAMRDWSGSYEKAHYLLGTAAGPHPFPTIVREFQRIIGEETKKQILEREGRLPDAVIACVGGGSNAIGMFADFIDETNVELIGVEPAGKGIDTHMHGAPLKHGKTGIFFGMKAPLMQDSEGQIEESYSISAGLDFPSVGPQHAHLNAIGRARYESATDDEALEAFQLLARCEGIIPALESAHALAYALRLAKECTKETILVVNLSGRGDKDIFTVSDILNGKEE.

Position 88 is an N6-(pyridoxal phosphate)lysine (K88).

This sequence belongs to the TrpB family. As to quaternary structure, tetramer of two alpha and two beta chains. The cofactor is pyridoxal 5'-phosphate.

It catalyses the reaction (1S,2R)-1-C-(indol-3-yl)glycerol 3-phosphate + L-serine = D-glyceraldehyde 3-phosphate + L-tryptophan + H2O. Its pathway is amino-acid biosynthesis; L-tryptophan biosynthesis; L-tryptophan from chorismate: step 5/5. The beta subunit is responsible for the synthesis of L-tryptophan from indole and L-serine. The sequence is that of Tryptophan synthase beta chain from Shewanella oneidensis (strain ATCC 700550 / JCM 31522 / CIP 106686 / LMG 19005 / NCIMB 14063 / MR-1).